The sequence spans 370 residues: Aminomethyltransferase (370 aa).

It belongs to the GcvT family. The glycine cleavage system is composed of four proteins: P, T, L and H.

The enzyme catalyses N(6)-[(R)-S(8)-aminomethyldihydrolipoyl]-L-lysyl-[protein] + (6S)-5,6,7,8-tetrahydrofolate = N(6)-[(R)-dihydrolipoyl]-L-lysyl-[protein] + (6R)-5,10-methylene-5,6,7,8-tetrahydrofolate + NH4(+). The glycine cleavage system catalyzes the degradation of glycine. In Clostridium botulinum (strain Kyoto / Type A2), this protein is Aminomethyltransferase.